Consider the following 405-residue polypeptide: CCA-adding enzyme (405 aa).

2 residues coordinate ATP: glycine 8 and arginine 11. The CTP site is built by glycine 8 and arginine 11. The Mg(2+) site is built by glutamate 21 and aspartate 23. Arginine 91, arginine 137, and arginine 140 together coordinate ATP. The CTP site is built by arginine 91, arginine 137, and arginine 140. The HD domain occupies 220–326 (PLSHGLSTLS…LNFFDELDLW (107 aa)).

The protein belongs to the tRNA nucleotidyltransferase/poly(A) polymerase family. Bacterial CCA-adding enzyme type 2 subfamily. Requires Mg(2+) as cofactor.

The catalysed reaction is a tRNA precursor + 2 CTP + ATP = a tRNA with a 3' CCA end + 3 diphosphate. It catalyses the reaction a tRNA with a 3' CCA end + 2 CTP + ATP = a tRNA with a 3' CCACCA end + 3 diphosphate. Functionally, catalyzes the addition and repair of the essential 3'-terminal CCA sequence in tRNAs without using a nucleic acid template. Adds these three nucleotides in the order of C, C, and A to the tRNA nucleotide-73, using CTP and ATP as substrates and producing inorganic pyrophosphate. tRNA 3'-terminal CCA addition is required both for tRNA processing and repair. Also involved in tRNA surveillance by mediating tandem CCA addition to generate a CCACCA at the 3' terminus of unstable tRNAs. While stable tRNAs receive only 3'-terminal CCA, unstable tRNAs are marked with CCACCA and rapidly degraded. This chain is CCA-adding enzyme, found in Hamiltonella defensa subsp. Acyrthosiphon pisum (strain 5AT).